Here is a 55-residue protein sequence, read N- to C-terminus: MPQLNPNPWFTILIFTWAVFLTILPNKVTSHKMPNELLTKDPSNLLTEIWYWPWH.

The chain crosses the membrane as a helical span at residues Leu-4–Leu-24.

Belongs to the ATPase protein 8 family. In terms of assembly, F-type ATPases have 2 components, CF(1) - the catalytic core - and CF(0) - the membrane proton channel.

The protein localises to the mitochondrion membrane. Its function is as follows. Mitochondrial membrane ATP synthase (F(1)F(0) ATP synthase or Complex V) produces ATP from ADP in the presence of a proton gradient across the membrane which is generated by electron transport complexes of the respiratory chain. F-type ATPases consist of two structural domains, F(1) - containing the extramembraneous catalytic core and F(0) - containing the membrane proton channel, linked together by a central stalk and a peripheral stalk. During catalysis, ATP synthesis in the catalytic domain of F(1) is coupled via a rotary mechanism of the central stalk subunits to proton translocation. Part of the complex F(0) domain. Minor subunit located with subunit a in the membrane. The sequence is that of ATP synthase protein 8 (mt-atp8) from Polypterus ornatipinnis (Ornate bichir).